The following is a 206-amino-acid chain: MSFLNIFTFFSVLVSVATAVRFDLTNVTCNNLHGPHCGTYVMEVVGQNGTFLGQSTFAGADVLTESAGDAWARYLGQETRFLPKLTTIASNDTKNFSPLIFTTNIYTCNPQSIGDAMVPFANTVTGEIEYNSWADTADNASFITGLANQLFNSTQYGVQVASCYPNFASVILSTPTVNIFAANETLPDYCTAIQLKAVCPPDAGFA.

The first 19 residues, 1–19, serve as a signal peptide directing secretion; it reads MSFLNIFTFFSVLVSVATA. N-linked (GlcNAc...) asparagine glycosylation is found at Asn-26, Asn-48, Asn-91, Asn-139, Asn-152, and Asn-183.

The protein belongs to the VEL1 family. N-glycosylated.

It localises to the cytoplasm. The protein localises to the cytosol. The protein is VEL1-related protein YOR387C of Saccharomyces cerevisiae (strain ATCC 204508 / S288c) (Baker's yeast).